Reading from the N-terminus, the 98-residue chain is NADH-ubiquinone oxidoreductase chain 4L (98 aa).

Transmembrane regions (helical) follow at residues methionine 1–methionine 21, alanine 29–leucine 49, and isoleucine 61–valine 81.

The protein belongs to the complex I subunit 4L family. In terms of assembly, core subunit of respiratory chain NADH dehydrogenase (Complex I) which is composed of 45 different subunits.

Its subcellular location is the mitochondrion inner membrane. The catalysed reaction is a ubiquinone + NADH + 5 H(+)(in) = a ubiquinol + NAD(+) + 4 H(+)(out). Functionally, core subunit of the mitochondrial membrane respiratory chain NADH dehydrogenase (Complex I) which catalyzes electron transfer from NADH through the respiratory chain, using ubiquinone as an electron acceptor. Part of the enzyme membrane arm which is embedded in the lipid bilayer and involved in proton translocation. In Eschrichtius robustus (California gray whale), this protein is NADH-ubiquinone oxidoreductase chain 4L (MT-ND4L).